The chain runs to 428 residues: Spliceosome RNA helicase DDX39B (428 aa).

The span at 1 to 19 (MAENDVDNELLDYEDDEVE) shows a compositional bias: acidic residues. Residues 1–31 (MAENDVDNELLDYEDDEVETAAGGDGAEAPA) are disordered. Residue Ala-2 is modified to N-acetylalanine. Lys-36 carries the post-translational modification N6-acetyllysine; alternate. A Glycyl lysine isopeptide (Lys-Gly) (interchain with G-Cter in SUMO2); alternate cross-link involves residue Lys-36. Phosphoserine occurs at positions 38 and 41. The Q motif motif lies at 45–73 (SGFRDFLLKPELLRAIVDCGFEHPSEVQH). Positions 76–249 (IPQAILGMDV…RKFMQDPMEI (174 aa)) constitute a Helicase ATP-binding domain. Residue 89-96 (AKSGMGKT) coordinates ATP. Residue Thr-172 is modified to Phosphothreonine. The DECD box motif lies at 196 to 199 (DECD). A Helicase C-terminal domain is found at 261–422 (GLQQYYVKLK…ELPDEIDISS (162 aa)).

The protein belongs to the DEAD box helicase family. DECD subfamily. Homodimer, and heterodimer with DDX39A. DDX39B interacts with the THO subcomplex to form the THO-DDX39B complex which multimerizes into a 28-subunit tetrameric assembly. Component of the transcription/export (TREX) complex at least composed of ALYREF/THOC4, DDX39B, SARNP/CIP29, CHTOP and the THO subcomplex; in the complex interacts with THOC2. THOC1-THOC2-THOC3-DDX39B subcomplex is sufficient for the interaction with export factor NXF1-NXT1. TREX seems to have a dynamic structure involving ATP-dependent remodeling. Within the TREX complex bridges ALYREF/THOC4 and the THO subcomplex, and, in a ATP-dependent manner, ALYREF/THOC4 and SARNP/CIP29. Component of the spliceosome. Interacts directly with U2AF2. Interacts with RBM8A, RNPS1 and SRRM1, FYTTD1/UIF, THOC1, MX1 and POLDIP3. Interacts with LUZP4. Interacts with SARNP/CIP29 (via the C-terminal domain); the interaction is direct and facilitates RNA binding of DDX39B.

It localises to the nucleus. It is found in the nucleus speckle. The protein localises to the cytoplasm. The catalysed reaction is ATP + H2O = ADP + phosphate + H(+). Involved in nuclear export of spliced and unspliced mRNA. Component of the TREX complex which is thought to couple mRNA transcription, processing and nuclear export, and specifically associates with spliced mRNA and not with unspliced pre-mRNA. The TREX complex is recruited to spliced mRNAs by a transcription-independent mechanism, binds to mRNA upstream of the exon-junction complex (EJC) and is recruited in a splicing- and cap-dependent manner to a region near the 5' end of the mRNA where it functions in mRNA export to the cytoplasm via the TAP/NXF1 pathway. The THOC1-THOC2-THOC3 core complex alone is sufficient to promote ATPase activity of DDX39B; in the complex THOC2 is the only component that directly interacts with DDX39B. Associates with SARNP/CIP29, which facilitates RNA binding of DDX39B and likely plays a role in mRNA export. May undergo several rounds of ATP hydrolysis during assembly of TREX to drive subsequent loading of components such as ALYREF/THOC4 and CHTOP onto mRNA. Also associates with pre-mRNA independent of ALYREF/THOC4. Involved in the nuclear export of intronless mRNA; the ATP-bound form is proposed to recruit export adapter ALYREF/THOC4 to intronless mRNA; its ATPase activity is cooperatively stimulated by RNA and ALYREF/THOC4 and ATP hydrolysis is thought to trigger the dissociation from RNA to allow the association of ALYREF/THOC4 and the NXF1-NXT1 heterodimer. Involved in transcription elongation and genome stability. Functionally, splice factor that is required for the first ATP-dependent step in spliceosome assembly and for the interaction of U2 snRNP with the branchpoint. Has both RNA-stimulated ATP binding/hydrolysis activity and ATP-dependent RNA unwinding activity. Even with the stimulation of RNA, the ATPase activity is weak. Can only hydrolyze ATP but not other NTPs. The RNA stimulation of ATPase activity does not have a strong preference for the sequence and length of the RNA. However, ssRNA stimulates the ATPase activity much more strongly than dsRNA. Can unwind 5' or 3' overhangs or blunt end RNA duplexes in vitro. The ATPase and helicase activities are not influenced by U2AF2; the effect of ALYREF/THOC4 is reported conflictingly. This Bos taurus (Bovine) protein is Spliceosome RNA helicase DDX39B (DDX39B).